A 194-amino-acid chain; its full sequence is Accessory gene regulator protein B (194 aa).

The next 5 helical transmembrane spans lie at 44-64, 80-100, 107-127, 142-162, and 163-183; these read IVVYGLAIIFHTFFYTLLTHL, SSLLCHIQNIIFFIIFPYLII, FVLLSMALVGLIITILYAPAA, KILSIFLYCTIVVISLVTKEP, and VNKLILFGVILESLTLLPIFF.

The protein belongs to the AgrB family.

It is found in the cell membrane. Its function is as follows. Essential for the production of a quorum sensing system signal molecule, the autoinducing peptide (AIP). This quorum sensing system is responsible for the regulation of the expression of virulence factor genes. Involved in the proteolytic processing of AgrD, the precursor of AIP. In Staphylococcus epidermidis, this protein is Accessory gene regulator protein B.